A 267-amino-acid polypeptide reads, in one-letter code: Transcription factor HES-1 (267 aa).

The interval 1 to 45 is disordered; that stretch reads MPADLMEKNSSSPVAATPASMSNTPDKPKTASEHRKSSKPIMEKR. Polar residues predominate over residues 8–25; that stretch reads KNSSSPVAATPASMSNTP. Residues 26–35 show a composition bias toward basic and acidic residues; it reads DKPKTASEHR. In terms of domain architecture, bHLH spans 34-91; the sequence is HRKSSKPIMEKRRRARINESLGQLKTLILDALKKDSSRHSKLEKADILEMTVKHLRNL. The Orange domain maps to 110–143; the sequence is YRAGFSECMNEVTRFLSTCEGVNTDVRTRLLGHL. The WRPW motif signature appears at 264-267; it reads WRPW.

In terms of assembly, transcription repression requires formation of a complex with a corepressor protein of the Groucho/TLE family. Interacts with the bHLH protein hes2, and binds DNA in the form of a heterodimer with the bHLH protein hey1/hrt1. Interacts with the bHLH protein hes6; this interaction may inhibit the transcriptional repressor activity.

It is found in the nucleus. Its function is as follows. Transcriptional repressor of a subset of early mesodermal genes including myod1 and t/bra. Binds DNA on N-box motifs: 5'-CACNAG-3'. Acts as a negative regulator of myogenesis, mediating Notch signaling to repress expression of myod1. This chain is Transcription factor HES-1, found in Xenopus tropicalis (Western clawed frog).